A 478-amino-acid polypeptide reads, in one-letter code: MTTTVETATATGRVARVIGPVVDVEFPVDAMPEIYNALHVEVADPAKEGELKTLTLEVAQHLGDGLVRTISMQPTDGLIRQAPVTDTGAAISVPVGDFTKGKVFNTLGEVLNVDEQYTGERWPIHRKAPNFDELESKTEMFETGVKVIDLLTPYVKGGKIGLFGGAGVGKTVLIQEMIYRVANNHDGVSVFAGVGERTREGNDLIDEMSESGVIDKTALVFGQMDEPPGTRLRVALAGLTMAEYFRDVQKQDVLFFIDNIFRFTQAGSEVSTLLGRMPSAVGYQPNLADEMGLLQERITSTRGHSITSMQAIYVPADDLTDPAPATTFAHLDATTVLSRPISEKGIYPAVDPLDSTSRILDPRYIAAEHYNAAMRVKNILQKYKDLQDIIAILGIDELGEEDKLVVHRARRVERFLSQNTHVAKQFTGVDGSDVPLDESIAAFNAICDGEYDHFPEQAFFMCGGIEDLKNNAKELGVS.

164–171 contributes to the ATP binding site; the sequence is GGAGVGKT.

The protein belongs to the ATPase alpha/beta chains family. In terms of assembly, F-type ATPases have 2 components, CF(1) - the catalytic core - and CF(0) - the membrane proton channel. CF(1) has five subunits: alpha(3), beta(3), gamma(1), delta(1), epsilon(1). CF(0) has three main subunits: a(1), b(2) and c(9-12). The alpha and beta chains form an alternating ring which encloses part of the gamma chain. CF(1) is attached to CF(0) by a central stalk formed by the gamma and epsilon chains, while a peripheral stalk is formed by the delta and b chains.

It is found in the cell membrane. The catalysed reaction is ATP + H2O + 4 H(+)(in) = ADP + phosphate + 5 H(+)(out). Its function is as follows. Produces ATP from ADP in the presence of a proton gradient across the membrane. The catalytic sites are hosted primarily by the beta subunits. The chain is ATP synthase subunit beta from Streptomyces coelicolor (strain ATCC BAA-471 / A3(2) / M145).